We begin with the raw amino-acid sequence, 766 residues long: BMP/retinoic acid-inducible neural-specific protein 3 (766 aa).

A signal peptide spans 1 to 33 (MIWRRRAGAELSSLMALWEWIVLSLHCWVLAVA). An MACPF domain is found at 74 to 264 (RYKIYREFGR…FVQAALSYIA (191 aa)). Asn-168, Asn-337, Asn-456, Asn-562, Asn-609, and Asn-641 each carry an N-linked (GlcNAc...) asparagine glycan.

The protein belongs to the BRINP family. As to expression, expressed in olfactory bulb, cerebellum and neuronal layers in hippocampus.

Its subcellular location is the secreted. The protein localises to the mitochondrion. Functionally, inhibits neuronal cell proliferation by negative regulation of the cell cycle transition. Promotes pituitary gonadotrope cell proliferation, migration and invasion, when overexpressed. May play a role in cell pituitary tumor development. In Rattus norvegicus (Rat), this protein is BMP/retinoic acid-inducible neural-specific protein 3 (Brinp3).